The sequence spans 65 residues: Kassorin-M (65 aa).

The N-terminal stretch at 1–22 (MLTLKKSMLLLFFLGMVSFSLA) is a signal peptide. Positions 23–51 (DDKREDEAEEGEDKRADEGEEKRAAEKKR) are excised as a propeptide. The tract at residues 24 to 45 (DKREDEAEEGEDKRADEGEEKR) is disordered. At Leu64 the chain carries Leucine amide.

Belongs to the frog skin active peptide (FSAP) family. Brevinin subfamily. In terms of tissue distribution, expressed by the skin glands.

The protein localises to the secreted. Functionally, induces contraction of smooth muscle in isolated guinea pig urinary bladder (EC50=4.66 nM). Has no antimicrobial activity against the Gram-positive bacterium S.aureus, the Gram-negative bacterium E.coli and the yeast C.albicans. Elicits histamine release from rat peritoneal mast cells. The sequence is that of Kassorin-M from Phlyctimantis maculatus (Red-legged running frog).